Reading from the N-terminus, the 506-residue chain is Ecdysteroid UDP-glucosyltransferase (506 aa).

The first 18 residues, 1–18, serve as a signal peptide directing secretion; sequence MTAYLIVFCLCCWSAARS.

This sequence belongs to the UDP-glycosyltransferase family.

In terms of biological role, catalyzes the transfer of glucose from UDP-glucose to ecdysteroids which are insect molting hormones. Expression of egt interferes with normal insect development and block molting. This chain is Ecdysteroid UDP-glucosyltransferase (EGT), found in Lymantria dispar multicapsid nuclear polyhedrosis virus (LdMNPV).